The sequence spans 271 residues: MIRTVITGITGRMGSTLLRLALDSGDLRVVGGTARPGSASVGQDAGVATRLGPVDVTVVDSLERALDAAQADVVIDFTSAELSVAHAKVCAARGVALVVGSTGFTPEASAALAESAKAVPIVAAPNMSVGVNLVIRMAAELARVLGPGFDVEVLEAHHRMKKDAPSGTALRLAEVLTEALGRTQEDLTFARHGQIGARPAREIGVQTLRGGDVVGEHTVYFLGEGERIELTHRATNRDQFAAGALRAARWVAGRAPGLHDMADVLGFQRTS.

8-13 (GITGRM) lines the NAD(+) pocket. Arg35 provides a ligand contact to NADP(+). Residues 100–102 (GST) and 124–127 (APNM) contribute to the NAD(+) site. His157 serves as the catalytic Proton donor/acceptor. Residue His158 coordinates (S)-2,3,4,5-tetrahydrodipicolinate. Lys161 serves as the catalytic Proton donor. 167 to 168 (GT) serves as a coordination point for (S)-2,3,4,5-tetrahydrodipicolinate.

This sequence belongs to the DapB family.

Its subcellular location is the cytoplasm. The catalysed reaction is (S)-2,3,4,5-tetrahydrodipicolinate + NAD(+) + H2O = (2S,4S)-4-hydroxy-2,3,4,5-tetrahydrodipicolinate + NADH + H(+). The enzyme catalyses (S)-2,3,4,5-tetrahydrodipicolinate + NADP(+) + H2O = (2S,4S)-4-hydroxy-2,3,4,5-tetrahydrodipicolinate + NADPH + H(+). It participates in amino-acid biosynthesis; L-lysine biosynthesis via DAP pathway; (S)-tetrahydrodipicolinate from L-aspartate: step 4/4. In terms of biological role, catalyzes the conversion of 4-hydroxy-tetrahydrodipicolinate (HTPA) to tetrahydrodipicolinate. The protein is 4-hydroxy-tetrahydrodipicolinate reductase of Myxococcus xanthus (strain DK1622).